The sequence spans 788 residues: Protein TRS1 (788 aa).

Disordered regions lie at residues 1-82 (MAQR…NFWH) and 610-663 (IHKK…PSRV). Over residues 16–25 (RGRGAGGPSG) the composition is skewed to gly residues. A compositionally biased stretch (low complexity) spans 26–56 (VGSSPPSSCVPMGATSTAGTGASAAPTATPG). The interval 74–248 (SGNNSNFWHG…HGAGEVVRLY (175 aa)) is RNA-binding. Positions 651–660 (LRRDDEDWKP) are enriched in basic and acidic residues. The segment at 672 to 788 (LDETFWVLGS…NVATHYHYNA (117 aa)) is interaction with host EIF2AK2/PKR.

Belongs to the herpesviridae US22 family. Interacts with host EIF2AK2/PKR; this interaction retains EIF2AK2 to the host nucleus and prevents its activation. Interaction (via N-terminus) with host BECN1; this interaction inhibits host autophagy. Interacts with the viral DNA polymerase accessory subunit UL44. Interacts with host HSPA5.

It localises to the virion. The protein localises to the host cytoplasm. The protein resides in the host nucleus. Its function is as follows. Inhibits the establishment of the antiviral state in the infected cell. Prevents the phosphorylation of the host eukaryotic translation initiation factor eIF-2alpha/EIF2S1 and thus the shutoff of viral and cellular protein synthesis by directly interacting with EIF2AK2/PKR. Prevents stress granule formation in response to eIF-2alpha/EIF2S1 phosphorylation, thereby rescuing viral replication and protein synthesis. Also inhibits host autophagy by interacting with host Beclin-1/BECN1. This chain is Protein TRS1 (TRS1), found in Human cytomegalovirus (strain Merlin) (HHV-5).